The chain runs to 166 residues: Apoptosis regulator M11L (166 aa).

The chain crosses the membrane as a helical span at residues Ser138–Leu160.

Interacts with host BAX; this interaction inhibits apoptosis activation. Interacts with host BAK1.

It is found in the host mitochondrion. It localises to the host membrane. In terms of biological role, plays a role in the inhibition of mitochondria-mediated apoptosis by blocking the activation of mitochondria-tranlocalized BAX thereby maintaining pro-apoptotic BAX in an inactive conformation. Also inhibits apoptosis in a BAX-independent manner by interacting with and inhibiting host BAK1. The protein is Apoptosis regulator M11L (m011L) of Myxoma virus (strain Lausanne) (MYXV).